The following is a 271-amino-acid chain: Putative phosphoenolpyruvate synthase regulatory protein (271 aa).

151–158 provides a ligand contact to ADP; it reads GVSRSGKT.

Belongs to the pyruvate, phosphate/water dikinase regulatory protein family. PSRP subfamily.

The enzyme catalyses [pyruvate, water dikinase] + ADP = [pyruvate, water dikinase]-phosphate + AMP + H(+). The catalysed reaction is [pyruvate, water dikinase]-phosphate + phosphate + H(+) = [pyruvate, water dikinase] + diphosphate. Functionally, bifunctional serine/threonine kinase and phosphorylase involved in the regulation of the phosphoenolpyruvate synthase (PEPS) by catalyzing its phosphorylation/dephosphorylation. The polypeptide is Putative phosphoenolpyruvate synthase regulatory protein (Burkholderia orbicola (strain MC0-3)).